A 221-amino-acid polypeptide reads, in one-letter code: Molybdenum cofactor guanylyltransferase (221 aa).

Residues 18–20 (IAG), lysine 35, asparagine 63, aspartate 81, and aspartate 112 each bind GTP. Aspartate 112 is a Mg(2+) binding site.

Belongs to the MobA family. In terms of assembly, monomer. Mg(2+) is required as a cofactor.

The protein localises to the cytoplasm. The enzyme catalyses Mo-molybdopterin + GTP + H(+) = Mo-molybdopterin guanine dinucleotide + diphosphate. In terms of biological role, transfers a GMP moiety from GTP to Mo-molybdopterin (Mo-MPT) cofactor (Moco or molybdenum cofactor) to form Mo-molybdopterin guanine dinucleotide (Mo-MGD) cofactor. This chain is Molybdenum cofactor guanylyltransferase, found in Brucella abortus (strain S19).